A 109-amino-acid chain; its full sequence is Small ribosomal subunit protein bS6 (109 aa).

It belongs to the bacterial ribosomal protein bS6 family.

In terms of biological role, binds together with bS18 to 16S ribosomal RNA. In Ehrlichia canis (strain Jake), this protein is Small ribosomal subunit protein bS6.